We begin with the raw amino-acid sequence, 485 residues long: MSPQTETKASVGFKAGVKDYKLTYYTPEYETKDTDILAAFRVTPQPGVPPEEAGAAVAAESSTGTWTTVWTDGLTSLDRYKGRCYGLEPVPGEDNQFIAYVAYPLDLFEEGSVTNMFTSIVGNVFGFKALRALRLEDLRIPTAYVKTFDGPPHGIQVERDKLNKYGRPLLGCTIKPKLGLSAKNYGRACYECLRGGLDFTKDDENVNSQPFMRWRDRFLFCAEAIYKAQAETGEIKGHYLNATAGNCEDMMKRAVFARELGVPIVMHDYLTGGFTANTSLSQYCRDNGLLLHIHRAMHAVIDRQKNHGMHFRVLAKALRMSGGDHIHSGTVVGKLEGEREITLGFVDLLRDDFIEKDRSRGIYFTQDWVSLPGVLPVASGGIHVWHMPALTEIFGDDSVLQFGGGTLGHPWGNAPGAVANRVALEACVQARNEGRDLATEGNEIIREATKWSPELAAACEVWKEIKFEFQAMDTLDTDKDKDKKR.

The propeptide occupies 1–2 (MS). Pro3 carries the post-translational modification N-acetylproline. Lys14 is subject to N6,N6,N6-trimethyllysine. The substrate site is built by Asn123 and Thr173. Lys175 functions as the Proton acceptor in the catalytic mechanism. Substrate is bound at residue Lys177. Lys201, Asp203, and Glu204 together coordinate Mg(2+). Lys201 carries the post-translational modification N6-carboxylysine. His294 (proton acceptor) is an active-site residue. Substrate contacts are provided by Arg295, His327, and Ser379.

This sequence belongs to the RuBisCO large chain family. Type I subfamily. As to quaternary structure, heterohexadecamer of 8 large chains and 8 small chains; disulfide-linked. The disulfide link is formed within the large subunit homodimers. The cofactor is Mg(2+). The disulfide bond which can form in the large chain dimeric partners within the hexadecamer appears to be associated with oxidative stress and protein turnover.

Its subcellular location is the plastid. It is found in the chloroplast. The enzyme catalyses 2 (2R)-3-phosphoglycerate + 2 H(+) = D-ribulose 1,5-bisphosphate + CO2 + H2O. It catalyses the reaction D-ribulose 1,5-bisphosphate + O2 = 2-phosphoglycolate + (2R)-3-phosphoglycerate + 2 H(+). Its function is as follows. RuBisCO catalyzes two reactions: the carboxylation of D-ribulose 1,5-bisphosphate, the primary event in carbon dioxide fixation, as well as the oxidative fragmentation of the pentose substrate in the photorespiration process. Both reactions occur simultaneously and in competition at the same active site. This Helianthus annuus (Common sunflower) protein is Ribulose bisphosphate carboxylase large chain.